Consider the following 660-residue polypeptide: tRNA 5-methylaminomethyl-2-thiouridine biosynthesis bifunctional protein MnmC (660 aa).

The interval 1 to 242 (MTDRIVPATL…KRAMLVGEFA (242 aa)) is tRNA (mnm(5)s(2)U34)-methyltransferase. The interval 266-660 (IGAGLAGCAV…VRALRHGRVA (395 aa)) is FAD-dependent cmnm(5)s(2)U34 oxidoreductase.

It in the N-terminal section; belongs to the methyltransferase superfamily. tRNA (mnm(5)s(2)U34)-methyltransferase family. In the C-terminal section; belongs to the DAO family. The cofactor is FAD.

The protein resides in the cytoplasm. The enzyme catalyses 5-aminomethyl-2-thiouridine(34) in tRNA + S-adenosyl-L-methionine = 5-methylaminomethyl-2-thiouridine(34) in tRNA + S-adenosyl-L-homocysteine + H(+). Its function is as follows. Catalyzes the last two steps in the biosynthesis of 5-methylaminomethyl-2-thiouridine (mnm(5)s(2)U) at the wobble position (U34) in tRNA. Catalyzes the FAD-dependent demodification of cmnm(5)s(2)U34 to nm(5)s(2)U34, followed by the transfer of a methyl group from S-adenosyl-L-methionine to nm(5)s(2)U34, to form mnm(5)s(2)U34. In Burkholderia pseudomallei (strain 1106a), this protein is tRNA 5-methylaminomethyl-2-thiouridine biosynthesis bifunctional protein MnmC.